The following is a 333-amino-acid chain: Glycogenin-1 (333 aa).

Residue Thr-2 is modified to N-acetylthreonine. Residues Leu-9, Thr-11, Asn-12, and Tyr-15 each contribute to the UDP site. Residues Leu-9, Thr-11, Asn-12, and Tyr-15 each contribute to the UDP-alpha-D-glucose site. Residue Ser-44 is modified to Phosphoserine. Arg-77 is a UDP binding site. Positions 77, 86, 102, 103, 104, 133, 134, 160, 163, and 164 each coordinate UDP-alpha-D-glucose. Asp-102, Ala-103, and Asp-104 together coordinate UDP. Asp-102 serves as a coordination point for Mn(2+). Residue Asp-104 participates in Mn(2+) binding. Residue Tyr-195 is glycosylated (O-linked (Glc...) tyrosine). Positions 212, 215, and 218 each coordinate UDP. His-212 serves as a coordination point for Mn(2+). Gly-215 and Lys-218 together coordinate UDP-alpha-D-glucose. Positions 284–316 (SDLSFGEAPAAPQPSMSSEERKERWEQGQADYM) are interaction with GYS1. The segment at 290–316 (EAPAAPQPSMSSEERKERWEQGQADYM) is disordered.

This sequence belongs to the glycosyltransferase 8 family. Glycogenin subfamily. In terms of assembly, part of the GYS1-GYG1 complex, a heterooctamer composed of a tetramer of GYS1 and 2 dimers of GYG1, where each GYS1 protomer binds to one GYG1 subunit (via GYG1 C-terminus); the GYS1 tetramer may dissociate from GYG1 dimers to continue glycogen polymerization on its own. May also form a heterooctamer complex with GYS2. Mn(2+) is required as a cofactor. In terms of processing, self-glycosylated by the transfer of glucose residues from UDP-glucose to itself, forming an alpha-1,4-glycan of around 10 residues attached to Tyr-195. Phosphorylated. In terms of tissue distribution, skeletal muscle, heart, to a lesser extent in kidney, lung and brain.

The protein localises to the cytoplasm. It localises to the nucleus. It carries out the reaction L-tyrosyl-[glycogenin] + UDP-alpha-D-glucose = alpha-D-glucosyl-L-tyrosyl-[glycogenin] + UDP + H(+). It catalyses the reaction [1,4-alpha-D-glucosyl](n)-L-tyrosyl-[glycogenin] + UDP-alpha-D-glucose = [1,4-alpha-D-glucosyl](n+1)-L-tyrosyl-[glycogenin] + UDP + H(+). It participates in glycan biosynthesis; glycogen biosynthesis. Its function is as follows. Glycogenin participates in the glycogen biosynthetic process along with glycogen synthase and glycogen branching enzyme. It catalyzes the formation of a short alpha (1,4)-glucosyl chain covalently attached via a glucose 1-O-tyrosyl linkage to internal tyrosine residues and these chains act as primers for the elongation reaction catalyzed by glycogen synthase. In Mus musculus (Mouse), this protein is Glycogenin-1.